A 208-amino-acid polypeptide reads, in one-letter code: GATA transcription factor 20 (208 aa).

The GATA-type zinc-finger motif lies at Cys94–Cys119.

Belongs to the type IV zinc-finger family. Class B subfamily.

It localises to the nucleus. Functionally, transcriptional regulator that specifically binds 5'-GATA-3' or 5'-GAT-3' motifs within gene promoters. The protein is GATA transcription factor 20 of Arabidopsis thaliana (Mouse-ear cress).